Here is a 379-residue protein sequence, read N- to C-terminus: Quinolinate synthase (379 aa).

Residues His60 and Ser81 each coordinate iminosuccinate. Cys126 contacts [4Fe-4S] cluster. Iminosuccinate is bound by residues Tyr152–Asn154 and Ser169. Position 213 (Cys213) interacts with [4Fe-4S] cluster. Iminosuccinate-binding positions include His239–Glu241 and Thr256. A [4Fe-4S] cluster-binding site is contributed by Cys310.

Belongs to the quinolinate synthase family. Type 1 subfamily. [4Fe-4S] cluster serves as cofactor.

It localises to the cytoplasm. The enzyme catalyses iminosuccinate + dihydroxyacetone phosphate = quinolinate + phosphate + 2 H2O + H(+). Its pathway is cofactor biosynthesis; NAD(+) biosynthesis; quinolinate from iminoaspartate: step 1/1. In terms of biological role, catalyzes the condensation of iminoaspartate with dihydroxyacetone phosphate to form quinolinate. In Herminiimonas arsenicoxydans, this protein is Quinolinate synthase.